The primary structure comprises 31 residues: Cyclotide Hyfl-A (31 aa).

Positions Ser-1–Asn-31 form a cross-link, cyclopeptide (Ser-Asn). Disulfide bonds link Cys-4-Cys-21, Cys-8-Cys-23, and Cys-13-Cys-28.

Belongs to the cyclotide family. Bracelet subfamily. Post-translationally, this is a cyclic peptide.

Its function is as follows. Probably participates in a plant defense mechanism. This chain is Cyclotide Hyfl-A, found in Hybanthus floribundus (Greenviolet).